The primary structure comprises 391 residues: Matrix metalloproteinase-23 (391 aa).

Residues 1–18 are Cytoplasmic-facing; that stretch reads MGCRACLRPEASGAVQGR. Positions 1 to 79 are excised as a propeptide; the sequence is MGCRACLRPE…LTMSVTRRRR (79 aa). Residues 19–39 traverse the membrane as a helical segment; that stretch reads WLGAALSGLCLLSALALLEWL. The Lumenal portion of the chain corresponds to 40–391; it reads GAPTETAWRA…TYSWRVRVRN (352 aa). 2 N-linked (GlcNAc...) asparagine glycosylation sites follow: N93 and N149. A Zn(2+)-binding site is contributed by H212. Residue E213 is part of the active site. Zn(2+) is bound by residues H216 and H222. N-linked (GlcNAc...) asparagine glycosylation occurs at N233. A ShKT domain is found at 256 to 290; the sequence is CLDRIFVCASWARKGFCDVRQRLMKRLCPRSCDFC. Intrachain disulfides connect C256–C290, C263–C283, and C272–C287. The region spanning 298–383 is the Ig-like C2-type domain; the sequence is VATTTSPTRT…RRHQRVLSTY (86 aa). An N-linked (GlcNAc...) asparagine glycan is attached at N317. C322 and C371 are joined by a disulfide.

Belongs to the peptidase M10A family. The cofactor is Zn(2+). N-glycosylated. Post-translationally, proteolytic cleavage might yield an active form. In terms of tissue distribution, expressed at relatively high level in heart, lung and spleen. Not detected in brain, liver, skeletal muscle, kidney and testis.

It localises to the endoplasmic reticulum membrane. The protein resides in the membrane. With respect to regulation, inhibited by TIMP2. In terms of biological role, protease. May regulate the surface expression of some potassium channels by retaining them in the endoplasmic reticulum. The chain is Matrix metalloproteinase-23 (Mmp23) from Mus musculus (Mouse).